A 120-amino-acid polypeptide reads, in one-letter code: NAD(P)H-quinone oxidoreductase subunit 3 (120 aa).

The next 3 helical transmembrane spans lie at 10–30, 64–84, and 89–109; these read FLGF…TNLI, MFAL…PWAV, and LGLL…IALA.

This sequence belongs to the complex I subunit 3 family. In terms of assembly, NDH-1 can be composed of about 15 different subunits; different subcomplexes with different compositions have been identified which probably have different functions.

The protein localises to the cellular thylakoid membrane. It carries out the reaction a plastoquinone + NADH + (n+1) H(+)(in) = a plastoquinol + NAD(+) + n H(+)(out). The enzyme catalyses a plastoquinone + NADPH + (n+1) H(+)(in) = a plastoquinol + NADP(+) + n H(+)(out). In terms of biological role, NDH-1 shuttles electrons from an unknown electron donor, via FMN and iron-sulfur (Fe-S) centers, to quinones in the respiratory and/or the photosynthetic chain. The immediate electron acceptor for the enzyme in this species is believed to be plastoquinone. Couples the redox reaction to proton translocation, and thus conserves the redox energy in a proton gradient. Cyanobacterial NDH-1 also plays a role in inorganic carbon-concentration. The sequence is that of NAD(P)H-quinone oxidoreductase subunit 3 from Prochlorococcus marinus subsp. pastoris (strain CCMP1986 / NIES-2087 / MED4).